Here is a 443-residue protein sequence, read N- to C-terminus: Mitochondrial enolase superfamily member 1 (443 aa).

Residues 24-26 (GAD) and tyrosine 34 contribute to the substrate site. Position 148 is a phosphoserine (serine 148). Lysine 220 serves as a coordination point for substrate. The Proton donor/acceptor role is filled by lysine 222. Aspartate 250 contacts Mg(2+). Substrate-binding positions include asparagine 252, glutamate 276, glutamate 305, 355-357 (HAG), and glutamate 386. Mg(2+) contacts are provided by glutamate 276 and glutamate 305. Histidine 355 is an active-site residue.

The protein belongs to the mandelate racemase/muconate lactonizing enzyme family. ENOSF1 subfamily. It depends on Mg(2+) as a cofactor. Could be sumoylated.

It localises to the mitochondrion. The catalysed reaction is L-fuconate = 2-dehydro-3-deoxy-L-fuconate + H2O. Plays a role in the catabolism of L-fucose, a sugar that is part of the carbohydrates that are attached to cellular glycoproteins. Catalyzes the dehydration of L-fuconate to 2-keto-3-deoxy-L-fuconate by the abstraction of the 2-proton to generate an enediolate intermediate that is stabilized by the magnesium ion. The polypeptide is Mitochondrial enolase superfamily member 1 (ENOSF1) (Homo sapiens (Human)).